A 155-amino-acid polypeptide reads, in one-letter code: Transcriptional repressor NrdR (155 aa).

The span at 1–11 (MECPNCHQNAS) shows a compositional bias: polar residues. Positions 1–22 (MECPNCHQNASRVIDSRPSDEN) are disordered. Residues 3 to 34 (CPNCHQNASRVIDSRPSDENRAIRRRRECENC) fold into a zinc finger. An ATP-cone domain is found at 49 to 139 (LLVIKNDGTR…IYREFKDMSS (91 aa)).

It belongs to the NrdR family. The cofactor is Zn(2+).

Negatively regulates transcription of bacterial ribonucleotide reductase nrd genes and operons by binding to NrdR-boxes. The polypeptide is Transcriptional repressor NrdR (Lactobacillus helveticus (strain DPC 4571)).